A 96-amino-acid polypeptide reads, in one-letter code: NADH-ubiquinone oxidoreductase chain 4L (96 aa).

The next 3 helical transmembrane spans lie at 2-22 (IMIL…FCFV), 28-48 (LLSM…MLFI), and 62-82 (MFLT…VSMI).

It belongs to the complex I subunit 4L family.

The protein resides in the mitochondrion membrane. It carries out the reaction a ubiquinone + NADH + 5 H(+)(in) = a ubiquinol + NAD(+) + 4 H(+)(out). Core subunit of the mitochondrial membrane respiratory chain NADH dehydrogenase (Complex I) that is believed to belong to the minimal assembly required for catalysis. Complex I functions in the transfer of electrons from NADH to the respiratory chain. The immediate electron acceptor for the enzyme is believed to be ubiquinone. This chain is NADH-ubiquinone oxidoreductase chain 4L (mt:ND4L), found in Drosophila melanogaster (Fruit fly).